The sequence spans 312 residues: UDP-N-acetylenolpyruvoylglucosamine reductase (312 aa).

The FAD-binding PCMH-type domain occupies 37–205 (VGGPADALVV…VCAEFALCPG (169 aa)). Arg-185 is an active-site residue. Ser-234 serves as the catalytic Proton donor. Glu-304 is an active-site residue.

It belongs to the MurB family. Requires FAD as cofactor.

It is found in the cytoplasm. It catalyses the reaction UDP-N-acetyl-alpha-D-muramate + NADP(+) = UDP-N-acetyl-3-O-(1-carboxyvinyl)-alpha-D-glucosamine + NADPH + H(+). The protein operates within cell wall biogenesis; peptidoglycan biosynthesis. In terms of biological role, cell wall formation. The chain is UDP-N-acetylenolpyruvoylglucosamine reductase from Syntrophus aciditrophicus (strain SB).